We begin with the raw amino-acid sequence, 425 residues long: Non-structural protein 2 (425 aa).

A coiled-coil region spans residues 29-64 (VSFDELVALREENAKLKQENEALKAKLHRLESDWTT).

The chain is Non-structural protein 2 (Segment-6) from Banna virus (BAV).